A 712-amino-acid polypeptide reads, in one-letter code: NURS complex subunit red1 (712 aa).

Basic and acidic residues predominate over residues 1–22 (MSRSINLDELRKKALESKKKNE). Disordered stretches follow at residues 1–71 (MSRS…DRFP), 107–195 (NKTF…TTNQ), and 323–348 (DDFS…GLTM). A coiled-coil region spans residues 5–32 (INLDELRKKALESKKKNEEDESNDSDKE). A compositionally biased stretch (acidic residues) spans 23 to 42 (EDESNDSDKEDGEISEDDPV). A compositionally biased stretch (low complexity) spans 130-141 (SETSDSSNTSQS). Composition is skewed to polar residues over residues 178–193 (FLST…SKTT) and 327–348 (NSKI…GLTM). A coiled-coil region spans residues 351 to 379 (SDYLALLRNKEEEIRRMTKLILRLESNKK). The disordered stretch occupies residues 428 to 447 (PSISSSGASSSAATTNSDTT). Residues 471–501 (AQIKKSEIDILNNLIEKEEGELTKYQTLVKS) are a coiled coil. A compositionally biased stretch (polar residues) spans 545–567 (QADENSSQILSSKTSNAPNGTTE). Residues 545–568 (QADENSSQILSSKTSNAPNGTTET) form a disordered region. Residues 618-639 (FCKYETTGGVCNDDHCEASHFR) form a C3H1-type zinc finger.

In terms of assembly, interacts with mmi1, pla1 and rrp6.

It localises to the nucleus. In terms of biological role, promotes the exosome-mediated degradation of mRNAs containing a DSR (determinant of selective removal) signal sequence from mitotic cells. This chain is NURS complex subunit red1, found in Schizosaccharomyces pombe (strain 972 / ATCC 24843) (Fission yeast).